We begin with the raw amino-acid sequence, 389 residues long: GDSL esterase/lipase At5g14450 (389 aa).

The first 30 residues, 1-30, serve as a signal peptide directing secretion; it reads MKDNLERAKLMVSSTVFSWLLLCLFAVTTS. The Nucleophile role is filled by Ser-48. 2 N-linked (GlcNAc...) asparagine glycosylation sites follow: Asn-125 and Asn-335. Active-site residues include Asp-354 and His-357.

The protein belongs to the 'GDSL' lipolytic enzyme family.

The protein resides in the secreted. This chain is GDSL esterase/lipase At5g14450, found in Arabidopsis thaliana (Mouse-ear cress).